The primary structure comprises 73 residues: UPF0235 protein PCC7424_0673 (73 aa).

It belongs to the UPF0235 family.

This Gloeothece citriformis (strain PCC 7424) (Cyanothece sp. (strain PCC 7424)) protein is UPF0235 protein PCC7424_0673.